The following is a 180-amino-acid chain: Large ribosomal subunit protein uL6 (180 aa).

It belongs to the universal ribosomal protein uL6 family. In terms of assembly, part of the 50S ribosomal subunit.

In terms of biological role, this protein binds to the 23S rRNA, and is important in its secondary structure. It is located near the subunit interface in the base of the L7/L12 stalk, and near the tRNA binding site of the peptidyltransferase center. The chain is Large ribosomal subunit protein uL6 from Caldanaerobacter subterraneus subsp. tengcongensis (strain DSM 15242 / JCM 11007 / NBRC 100824 / MB4) (Thermoanaerobacter tengcongensis).